Reading from the N-terminus, the 93-residue chain is Cell division protein CrgA (93 aa).

A run of 2 helical transmembrane segments spans residues 31-51 (VWFVALFIGLMLIGLVWLMVF) and 70-90 (LGPWNYAIAFAFMITGLLLTM).

Belongs to the CrgA family.

The protein resides in the cell membrane. Its function is as follows. Involved in cell division. This chain is Cell division protein CrgA, found in Mycobacterium marinum (strain ATCC BAA-535 / M).